Reading from the N-terminus, the 232-residue chain is Ornithine carbamoyltransferase (232 aa).

Carbamoyl phosphate-binding positions include Q15, R39, and 66 to 69 (HPTQ). L-ornithine-binding positions include N99, D163, and 167 to 168 (SM). Residues 204-207 (HCLP) and T232 each bind carbamoyl phosphate.

It belongs to the aspartate/ornithine carbamoyltransferase superfamily. OTCase family.

It localises to the cytoplasm. The catalysed reaction is carbamoyl phosphate + L-ornithine = L-citrulline + phosphate + H(+). It participates in amino-acid biosynthesis; L-arginine biosynthesis; L-arginine from L-ornithine and carbamoyl phosphate: step 1/3. Its function is as follows. Reversibly catalyzes the transfer of the carbamoyl group from carbamoyl phosphate (CP) to the N(epsilon) atom of ornithine (ORN) to produce L-citrulline. The polypeptide is Ornithine carbamoyltransferase (argF) (Neisseria subflava).